The following is a 349-amino-acid chain: Beta-hexosaminidase (349 aa).

Substrate contacts are provided by residues aspartate 64, arginine 72, arginine 138, and 168–169; that span reads KH. Catalysis depends on histidine 181, which acts as the Proton donor/acceptor. The active-site Nucleophile is aspartate 252.

It belongs to the glycosyl hydrolase 3 family. NagZ subfamily.

It localises to the cytoplasm. The catalysed reaction is Hydrolysis of terminal non-reducing N-acetyl-D-hexosamine residues in N-acetyl-beta-D-hexosaminides.. Its pathway is cell wall biogenesis; peptidoglycan recycling. Functionally, plays a role in peptidoglycan recycling by cleaving the terminal beta-1,4-linked N-acetylglucosamine (GlcNAc) from peptide-linked peptidoglycan fragments, giving rise to free GlcNAc, anhydro-N-acetylmuramic acid and anhydro-N-acetylmuramic acid-linked peptides. The protein is Beta-hexosaminidase of Nitrosospira multiformis (strain ATCC 25196 / NCIMB 11849 / C 71).